Consider the following 285-residue polypeptide: ATP phosphoribosyltransferase (285 aa).

Belongs to the ATP phosphoribosyltransferase family. Long subfamily. The cofactor is Mg(2+).

The protein localises to the cytoplasm. The catalysed reaction is 1-(5-phospho-beta-D-ribosyl)-ATP + diphosphate = 5-phospho-alpha-D-ribose 1-diphosphate + ATP. It functions in the pathway amino-acid biosynthesis; L-histidine biosynthesis; L-histidine from 5-phospho-alpha-D-ribose 1-diphosphate: step 1/9. With respect to regulation, feedback inhibited by histidine. Its function is as follows. Catalyzes the condensation of ATP and 5-phosphoribose 1-diphosphate to form N'-(5'-phosphoribosyl)-ATP (PR-ATP). Has a crucial role in the pathway because the rate of histidine biosynthesis seems to be controlled primarily by regulation of HisG enzymatic activity. In Sulfolobus acidocaldarius (strain ATCC 33909 / DSM 639 / JCM 8929 / NBRC 15157 / NCIMB 11770), this protein is ATP phosphoribosyltransferase.